The chain runs to 352 residues: C-C chemokine receptor type 5 (352 aa).

Over 1–30 the chain is Extracellular; it reads MDYQVSSPTYDIDYYTSEPCQKINVKQIAA. Tyr3 carries the post-translational modification Sulfotyrosine. Residues Ser6 and Ser7 are each glycosylated (O-linked (GalNAc...) serine). Residues Tyr10, Tyr14, and Tyr15 each carry the sulfotyrosine modification. Intrachain disulfides connect Cys20–Cys269 and Cys101–Cys178. Residues 31-58 form a helical membrane-spanning segment; it reads RLLPPLYSLVFIFGFVGNILVVLILINC. Residues 59 to 68 are Cytoplasmic-facing; the sequence is KRLKSMTDIY. The chain crosses the membrane as a helical span at residues 69-89; sequence LLNLAISDLLFLLTVPFWAHY. The Extracellular portion of the chain corresponds to 90 to 102; that stretch reads AAAQWDFGNTMCQ. A helical transmembrane segment spans residues 103-124; sequence LLTGLYFIGFFSGIFFIILLTI. The Cytoplasmic segment spans residues 125–141; the sequence is DRYLAIVHAVFALKART. Residues 142–166 traverse the membrane as a helical segment; that stretch reads VTFGVVTSVITWVVAVFASLPGIIF. At 167-198 the chain is on the extracellular side; it reads TRSQREGLHYTCSSHFPYSQYQFWKNFQTLKI. A helical transmembrane segment spans residues 199–218; sequence VILGLVLPLLVMVICYSGIL. Residues 219–235 lie on the Cytoplasmic side of the membrane; that stretch reads KTLLRCRNEKKRHRAVR. Residues 236-260 form a helical membrane-spanning segment; the sequence is LIFTIMIVYFLFWAPYNIVLLLNTF. Topologically, residues 261–277 are extracellular; that stretch reads QEFFGLNNCSSSNRLDQ. The chain crosses the membrane as a helical span at residues 278–301; sequence AMQVTETLGMTHCCINPIIYAFVG. The Cytoplasmic portion of the chain corresponds to 302 to 352; the sequence is EKFRNYLLVFFQKHIAKRFCKCCSIFQQEAPERASSVYTRSTGEQEISVGL. Residues Cys321, Cys323, and Cys324 are each lipidated (S-palmitoyl cysteine). Phosphoserine; by BARK1 occurs at positions 336, 337, 342, and 349.

The protein belongs to the G-protein coupled receptor 1 family. As to quaternary structure, interacts with PRAF2. Efficient ligand binding to CCL3/MIP-1alpha and CCL4/MIP-1beta requires sulfation, O-glycosylation and sialic acid modifications. Glycosylation on Ser-6 is required for efficient binding of CCL4. Interacts with GRK2. Interacts with ARRB1 and ARRB2. Interacts with CNIH4. Interacts with S100A4; this interaction stimulates T-lymphocyte chemotaxis. Sulfated on at least 2 of the N-terminal tyrosines. Sulfation is required for efficient binding of the chemokines, CCL3 and CCL4. In terms of processing, palmitoylation in the C-terminal is important for cell surface expression. Post-translationally, phosphorylation on serine residues in the C-terminal is stimulated by binding CC chemokines especially by APO-RANTES. O-glycosylated, but not N-glycosylated. Ser-6 appears to be the major site even if Ser-7 may be also O-glycosylated. Also sialylated glycans present which contribute to chemokine binding. Thr-16 and Ser-17 may also be glycosylated and, if so, with small moieties such as a T-antigen.

The protein resides in the cell membrane. Functionally, receptor for a number of inflammatory CC-chemokines including CCL3/MIP-1-alpha, CCL4/MIP-1-beta and RANTES and subsequently transduces a signal by increasing the intracellular calcium ion level. May play a role in the control of granulocytic lineage proliferation or differentiation. Participates in T-lymphocyte migration to the infection site by acting as a chemotactic receptor. The sequence is that of C-C chemokine receptor type 5 (CCR5) from Papio anubis (Olive baboon).